Consider the following 289-residue polypeptide: Thymidylate synthase (289 aa).

DUMP-binding positions include R21 and 150 to 151 (RR). C170 functions as the Nucleophile in the catalytic mechanism. DUMP-binding positions include 191–194 (RSAD), N202, and 232–234 (HIY). Position 194 (D194) interacts with (6R)-5,10-methylene-5,6,7,8-tetrahydrofolate. (6R)-5,10-methylene-5,6,7,8-tetrahydrofolate is bound at residue A288.

The protein belongs to the thymidylate synthase family. Bacterial-type ThyA subfamily. Homodimer.

The protein resides in the cytoplasm. The catalysed reaction is dUMP + (6R)-5,10-methylene-5,6,7,8-tetrahydrofolate = 7,8-dihydrofolate + dTMP. The protein operates within pyrimidine metabolism; dTTP biosynthesis. Catalyzes the reductive methylation of 2'-deoxyuridine-5'-monophosphate (dUMP) to 2'-deoxythymidine-5'-monophosphate (dTMP) while utilizing 5,10-methylenetetrahydrofolate (mTHF) as the methyl donor and reductant in the reaction, yielding dihydrofolate (DHF) as a by-product. This enzymatic reaction provides an intracellular de novo source of dTMP, an essential precursor for DNA biosynthesis. The sequence is that of Thymidylate synthase from Malacoplasma penetrans (strain HF-2) (Mycoplasma penetrans).